The following is a 118-amino-acid chain: Cell division topological specificity factor (118 aa).

A disordered region spans residues Arg-86 to Glu-118. A compositionally biased stretch (low complexity) spans Ala-99–Ser-112.

It belongs to the MinE family.

In terms of biological role, prevents the cell division inhibition by proteins MinC and MinD at internal division sites while permitting inhibition at polar sites. This ensures cell division at the proper site by restricting the formation of a division septum at the midpoint of the long axis of the cell. This is Cell division topological specificity factor from Prochlorococcus marinus (strain MIT 9313).